Reading from the N-terminus, the 400-residue chain is Phosphoglycerate kinase (400 aa).

Substrate-binding positions include 21-23, Arg37, 60-63, Arg119, and Arg152; these read DFN and HFGR. ATP contacts are provided by residues Lys205, Gly296, Glu327, and 353–356; that span reads GGDT.

The protein belongs to the phosphoglycerate kinase family. In terms of assembly, monomer.

It localises to the cytoplasm. The enzyme catalyses (2R)-3-phosphoglycerate + ATP = (2R)-3-phospho-glyceroyl phosphate + ADP. Its pathway is carbohydrate degradation; glycolysis; pyruvate from D-glyceraldehyde 3-phosphate: step 2/5. The chain is Phosphoglycerate kinase from Aliarcobacter butzleri (strain RM4018) (Arcobacter butzleri).